A 170-amino-acid polypeptide reads, in one-letter code: Phosphothreonine lyase OspF (170 aa).

The active-site Proton donor is histidine 82. Lysine 112 (proton acceptor) is an active-site residue.

Belongs to the phosphothreonine lyase family.

The protein localises to the secreted. Catalyzes the removal of the phosphate group from the phosphothreonine in the mitogen-activated protein kinases such as MAPK2/ERK2, MAPK3/ERK1, MAPK8 and MAPK14 in an irreversible reaction, thus preventing the downstream phosphorylation of histone H3. This epigenetic modification results in inhibition of the transcription of a specific subset of pro-inflammatory genes, and ultimately to a reduced immune response against the invading pathogen. The diminished immune response enhances the bacterium's ability to disseminate and multiply within the host. The chain is Phosphothreonine lyase OspF (ospF) from Shigella boydii.